Reading from the N-terminus, the 360-residue chain is Protein RecA (360 aa).

77 to 84 is a binding site for ATP; that stretch reads GPESSGKT.

Belongs to the RecA family.

The protein localises to the cytoplasm. Its function is as follows. Can catalyze the hydrolysis of ATP in the presence of single-stranded DNA, the ATP-dependent uptake of single-stranded DNA by duplex DNA, and the ATP-dependent hybridization of homologous single-stranded DNAs. It interacts with LexA causing its activation and leading to its autocatalytic cleavage. This is Protein RecA from Chelativorans sp. (strain BNC1).